The chain runs to 364 residues: Carbamoyl phosphate synthase pyrimidine-specific small chain (364 aa).

The segment at 1-169 is CPSase; that stretch reads MKRYLVLEDG…AYPNPATGPN (169 aa). Residues serine 45, glycine 217, and glycine 219 each coordinate L-glutamine. A Glutamine amidotransferase type-1 domain is found at 169–356; that stretch reads NVVVVDFGLK…IDLMAANQAT (188 aa). Catalysis depends on cysteine 244, which acts as the Nucleophile. L-glutamine contacts are provided by leucine 245, glutamine 248, asparagine 286, glycine 288, and tyrosine 289. Residues histidine 329 and aspartate 331 contribute to the active site.

It belongs to the CarA family. Composed of two chains; the small (or glutamine) chain promotes the hydrolysis of glutamine to ammonia, which is used by the large (or ammonia) chain to synthesize carbamoyl phosphate. Tetramer of heterodimers (alpha,beta)4.

The catalysed reaction is hydrogencarbonate + L-glutamine + 2 ATP + H2O = carbamoyl phosphate + L-glutamate + 2 ADP + phosphate + 2 H(+). It carries out the reaction L-glutamine + H2O = L-glutamate + NH4(+). Its pathway is pyrimidine metabolism; UMP biosynthesis via de novo pathway; (S)-dihydroorotate from bicarbonate: step 1/3. With respect to regulation, inhibited by pyrimidine. Functionally, small subunit of the glutamine-dependent carbamoyl phosphate synthetase (CPSase). CPSase catalyzes the formation of carbamoyl phosphate from the ammonia moiety of glutamine, carbonate, and phosphate donated by ATP, constituting the first step of the biosynthetic pathway leading to pyrimidine nucleotides. The small subunit (glutamine amidotransferase) binds and cleaves glutamine to supply the large subunit with the substrate ammonia. This chain is Carbamoyl phosphate synthase pyrimidine-specific small chain, found in Lactiplantibacillus plantarum (strain ATCC BAA-793 / NCIMB 8826 / WCFS1) (Lactobacillus plantarum).